A 264-amino-acid chain; its full sequence is Apolipoprotein A-I (264 aa).

An N-terminal signal peptide occupies residues 1 to 18 (MKAVVLAVAVLFLTGSQA). 2 repeat units span residues 67 to 88 (LNLL…EQLG) and 89 to 110 (SVTK…QQMN). Residues 67-264 (LNLLANWNTL…DQASKQLSAQ (198 aa)) are 10 X approximate tandem repeats. M109 carries the post-translational modification Methionine sulfoxide. The 3; half-length repeat unit spans residues 111 to 121 (KDLEEVKQKVQ). 5 repeat units span residues 122-142 (SYLD…RDKV), 144-165 (PLGK…EKLA), 166-187 (PLGQ…THLG), 188-208 (SYTQ…KESA), and 209-229 (PVSE…EKAK). Position 193 is a methionine sulfoxide (M193). Residues 230–240 (PALEDLRQGLM) form a 9; half-length repeat. Methionine sulfoxide is present on M240. Repeat unit 10 spans residues 241-264 (PVMESLKASFLSSIDQASKQLSAQ).

Belongs to the apolipoprotein A1/A4/E family. As to quaternary structure, homodimer. Interacts with APOA1BP and CLU. Component of a sperm activating protein complex (SPAP), consisting of APOA1, an immunoglobulin heavy chain, an immunoglobulin light chain and albumin. Interacts with NDRG1. Interacts with SCGB3A2. Interacts with NAXE and YJEFN3. Glycosylated. In terms of processing, palmitoylated. Post-translationally, phosphorylation sites are present in the extracellular medium. As to expression, major protein of plasma HDL, also found in chylomicrons.

The protein resides in the secreted. Its function is as follows. Participates in the reverse transport of cholesterol from tissues to the liver for excretion by promoting cholesterol efflux from tissues and by acting as a cofactor for the lecithin cholesterol acyltransferase (LCAT). As part of the SPAP complex, activates spermatozoa motility. The sequence is that of Apolipoprotein A-I (Apoa1) from Heterocephalus glaber (Naked mole rat).